A 276-amino-acid chain; its full sequence is Large ribosomal subunit protein uL2 (276 aa).

A disordered region spans residues 219–276 (TVRGSVMNPNDHPHGGGEGRSPIGRPSPVTPWGKPALGYKTRKKNKASNKLIVSRRTK). Residues 258-276 (KTRKKNKASNKLIVSRRTK) are compositionally biased toward basic residues.

Belongs to the universal ribosomal protein uL2 family. Part of the 50S ribosomal subunit. Forms a bridge to the 30S subunit in the 70S ribosome.

One of the primary rRNA binding proteins. Required for association of the 30S and 50S subunits to form the 70S ribosome, for tRNA binding and peptide bond formation. It has been suggested to have peptidyltransferase activity; this is somewhat controversial. Makes several contacts with the 16S rRNA in the 70S ribosome. This is Large ribosomal subunit protein uL2 from Clostridioides difficile (strain 630) (Peptoclostridium difficile).